A 186-amino-acid chain; its full sequence is Transcriptional repressor NrdR (186 aa).

A disordered region spans residues 1–24 (MRCPYCGGLDTQVKDSRPSDDASA). Residues 3 to 34 (CPYCGGLDTQVKDSRPSDDASAIRRRRICPDC) fold into a zinc finger. Basic and acidic residues predominate over residues 12–24 (QVKDSRPSDDASA). The ATP-cone domain occupies 49 to 139 (LTVVKRSGRR…VYKNFREARD (91 aa)). A disordered region spans residues 146-186 (RLNGAGRPGGEPEPPDEAAPGPAAAPGEGGEAPARRARSRA).

The protein belongs to the NrdR family. It depends on Zn(2+) as a cofactor.

In terms of biological role, negatively regulates transcription of bacterial ribonucleotide reductase nrd genes and operons by binding to NrdR-boxes. The polypeptide is Transcriptional repressor NrdR (Methylobacterium sp. (strain 4-46)).